Consider the following 706-residue polypeptide: uncharacterized protein (706 aa).

This is an uncharacterized protein from Rickettsia prowazekii (strain Madrid E).